Here is a 462-residue protein sequence, read N- to C-terminus: CD-NTase-associated protein 4 (462 aa).

The N-terminal endonuclease domain stretch occupies residues 1–226 (MSASLLEKQS…FENFICHALE (226 aa)). Catalysis depends on residues Asp50, Glu67, and Lys69. Position 50 (Asp50) interacts with Mg(2+). The interval 235-462 (DPIKINLSAS…QYIPTAELNL (228 aa)) is C-terminal SAVED domain. 2',3',3'-c-tri-AMP contacts are provided by residues 299-301 (KQR), Trp449, and Tyr454.

This sequence belongs to the Cap4 nuclease family. A monomer in the absence of ligand, in its presence it forms oligomers. The cofactor is a divalent metal cation.

Its activity is regulated as follows. DNase activity is activated upon ligand binding. Inhibited by EDTA. Its function is as follows. Effector DNase of a CBASS antivirus system. CBASS (cyclic oligonucleotide-based antiphage signaling system) provides immunity against bacteriophage. The CD-NTase protein synthesizes cyclic nucleotides in response to infection; these serve as specific second messenger signals. The signals activate a diverse range of effectors, leading to bacterial cell death and thus abortive phage infection. A type II-C(AAAA) CBASS system. Functionally, binds cyclic nucleotide second messengers (synthesized by CdnD, the cognate CD-NTase in the CBASS operon). Ligand binding activates it to endonucleolytically degrade dsDNA to approximately 6 bp length fragments, with a preference for 5'-C or 5'-G cleavage site. The minor product of CdnD is the activating nucleotide; also binds the major product (2',3',3'-cyclic AMP-AMP-AMP) but is not activated by it. Only binds DNA in the presence of ligand. Is not activated by c-di-AMP, c-di-GMP, 3'3'-cyclic GMP-AMP (3'3'-cGAMP) or 3',3',3'-cyclic AMP-AMP-GMP. The sequence is that of CD-NTase-associated protein 4 from Acinetobacter sp. (strain ATCC 27244 / 9458).